The following is a 510-amino-acid chain: Lysine--tRNA ligase (510 aa).

Residues Glu420 and Glu427 each coordinate Mg(2+).

This sequence belongs to the class-II aminoacyl-tRNA synthetase family. As to quaternary structure, homodimer. It depends on Mg(2+) as a cofactor.

It is found in the cytoplasm. It catalyses the reaction tRNA(Lys) + L-lysine + ATP = L-lysyl-tRNA(Lys) + AMP + diphosphate. This chain is Lysine--tRNA ligase, found in Clostridium novyi (strain NT).